We begin with the raw amino-acid sequence, 793 residues long: Phosphoribosylformylglycinamidine synthase subunit PurL (793 aa).

The active site involves histidine 53. The ATP site is built by tyrosine 56 and lysine 95. Glutamate 97 contributes to the Mg(2+) binding site. Residues 98 to 101 (SHNH) and arginine 120 each bind substrate. The active-site Proton acceptor is histidine 99. A Mg(2+)-binding site is contributed by aspartate 121. Substrate is bound at residue glutamine 244. Aspartate 272 contacts Mg(2+). 316 to 318 (ESQ) provides a ligand contact to substrate. ATP-binding residues include aspartate 523 and glycine 560. Asparagine 561 is a Mg(2+) binding site. Serine 563 is a substrate binding site.

Belongs to the FGAMS family. As to quaternary structure, monomer. Part of the FGAM synthase complex composed of 1 PurL, 1 PurQ and 2 PurS subunits.

It localises to the cytoplasm. It carries out the reaction N(2)-formyl-N(1)-(5-phospho-beta-D-ribosyl)glycinamide + L-glutamine + ATP + H2O = 2-formamido-N(1)-(5-O-phospho-beta-D-ribosyl)acetamidine + L-glutamate + ADP + phosphate + H(+). It participates in purine metabolism; IMP biosynthesis via de novo pathway; 5-amino-1-(5-phospho-D-ribosyl)imidazole from N(2)-formyl-N(1)-(5-phospho-D-ribosyl)glycinamide: step 1/2. In terms of biological role, part of the phosphoribosylformylglycinamidine synthase complex involved in the purines biosynthetic pathway. Catalyzes the ATP-dependent conversion of formylglycinamide ribonucleotide (FGAR) and glutamine to yield formylglycinamidine ribonucleotide (FGAM) and glutamate. The FGAM synthase complex is composed of three subunits. PurQ produces an ammonia molecule by converting glutamine to glutamate. PurL transfers the ammonia molecule to FGAR to form FGAM in an ATP-dependent manner. PurS interacts with PurQ and PurL and is thought to assist in the transfer of the ammonia molecule from PurQ to PurL. This Prochlorococcus marinus (strain SARG / CCMP1375 / SS120) protein is Phosphoribosylformylglycinamidine synthase subunit PurL.